Reading from the N-terminus, the 499-residue chain is Hepatic triacylglycerol lipase (499 aa).

The first 22 residues, 1 to 22, serve as a signal peptide directing secretion; sequence MDTSPLCFSILLVLCIFIQSSA. N-linked (GlcNAc...) asparagine glycans are attached at residues Asn-42 and Asn-78. Ser-168 (nucleophile) is an active-site residue. Asp-194 serves as the catalytic Charge relay system. The interval 254–277 is essential for determining substrate specificity; the sequence is CHFLELYRHIAQHGFNAITQTIKC. His-279 serves as the catalytic Charge relay system. A PLAT domain is found at 352–486; the sequence is YHYQFKIQFI…RPTQEKIFVK (135 aa). 2 N-linked (GlcNAc...) asparagine glycosylation sites follow: Asn-362 and Asn-397.

Belongs to the AB hydrolase superfamily. Lipase family. Homodimer.

It localises to the secreted. The catalysed reaction is a triacylglycerol + H2O = a diacylglycerol + a fatty acid + H(+). It catalyses the reaction a 1-acyl-sn-glycero-3-phosphocholine + H2O = sn-glycerol 3-phosphocholine + a fatty acid + H(+). The enzyme catalyses a 1,2-diacyl-sn-glycero-3-phosphocholine + H2O = a 2-acyl-sn-glycero-3-phosphocholine + a fatty acid + H(+). It carries out the reaction 1,2,3-tri-(9Z-octadecenoyl)-glycerol + H2O = di-(9Z)-octadecenoylglycerol + (9Z)-octadecenoate + H(+). The catalysed reaction is 1,2-di-(9Z-octadecenoyl)-sn-glycero-3-phosphocholine + H2O = (9Z-octadecenoyl)-sn-glycero-3-phosphocholine + (9Z)-octadecenoate + H(+). It catalyses the reaction 1,2,3-tributanoylglycerol + H2O = dibutanoylglycerol + butanoate + H(+). The enzyme catalyses 1,2-dihexadecanoyl-sn-glycero-3-phosphocholine + H2O = hexadecanoyl-sn-glycero-3-phosphocholine + hexadecanoate + H(+). It carries out the reaction 1,2-di-(9Z-octadecenoyl)-sn-glycerol + H2O = 2-(9Z-octadecenoyl)-glycerol + (9Z)-octadecenoate + H(+). The catalysed reaction is 1,2,3-tri-(9Z-octadecenoyl)-glycerol + H2O = 2,3-di-(9Z)-octadecenoyl-sn-glycerol + (9Z)-octadecenoate + H(+). It catalyses the reaction 1-(9Z-octadecenoyl)-sn-glycero-3-phospho-L-serine + H2O = sn-glycero-3-phospho-L-serine + (9Z)-octadecenoate + H(+). The enzyme catalyses 1-hexadecanoyl-sn-glycero-3-phosphocholine + H2O = sn-glycerol 3-phosphocholine + hexadecanoate + H(+). It carries out the reaction 1,3-di-(9Z-octadecenoyl)-glycerol + H2O = 3-(9Z-octadecenoyl)-sn-glycerol + (9Z)-octadecenoate + H(+). With respect to regulation, phospholipase A1 and triacylglycerol lipase are inhibited by sphingomyelin. Catalyzes the hydrolysis of triglycerides and phospholipids present in circulating plasma lipoproteins, including chylomicrons, intermediate density lipoproteins (IDL), low density lipoproteins (LDL) of large size and high density lipoproteins (HDL), releasing free fatty acids (FFA) and smaller lipoprotein particles. Also exhibits lysophospholipase activity. Can hydrolyze both neutral lipid and phospholipid substrates but shows a greater binding affinity for neutral lipid substrates than phospholipid substrates. In native LDL, preferentially hydrolyzes the phosphatidylcholine species containing polyunsaturated fatty acids at sn-2 position. In Homo sapiens (Human), this protein is Hepatic triacylglycerol lipase (LIPC).